A 439-amino-acid polypeptide reads, in one-letter code: Glutamyl-tRNA(Gln) amidotransferase subunit D (439 aa).

Residues 88–419 form the Asparaginase/glutaminase domain; it reads GKVKIISTGG…EEVKRIMLTN (332 aa). Catalysis depends on residues T98, T174, D175, and K253.

This sequence belongs to the asparaginase 1 family. GatD subfamily. Heterodimer of GatD and GatE.

It carries out the reaction L-glutamyl-tRNA(Gln) + L-glutamine + ATP + H2O = L-glutaminyl-tRNA(Gln) + L-glutamate + ADP + phosphate + H(+). In terms of biological role, allows the formation of correctly charged Gln-tRNA(Gln) through the transamidation of misacylated Glu-tRNA(Gln) in organisms which lack glutaminyl-tRNA synthetase. The reaction takes place in the presence of glutamine and ATP through an activated gamma-phospho-Glu-tRNA(Gln). The GatDE system is specific for glutamate and does not act on aspartate. In Metallosphaera sedula (strain ATCC 51363 / DSM 5348 / JCM 9185 / NBRC 15509 / TH2), this protein is Glutamyl-tRNA(Gln) amidotransferase subunit D.